The chain runs to 537 residues: Cytochrome bd ubiquinol oxidase subunit 1 (537 aa).

The Cytoplasmic portion of the chain corresponds to 1 to 24; that stretch reads MISESVVDLSRLQFAMTALYHFLF. H21 is a binding site for heme b. A helical transmembrane segment spans residues 25–44; sequence VPLTLGMTFLLAIMESVYVM. The Periplasmic segment spans residues 45–96; it reads TGKQVYKDMVKFWGKLFGINFALGVTTGITMEFQFGTNWAYYSHYVGDIFGA. The chain crosses the membrane as a helical span at residues 97 to 116; the sequence is PLAIEGLTAFFLESTFIGMF. The Cytoplasmic portion of the chain corresponds to 117–131; the sequence is FFGWDRLSKIQHLAV. Residues 132-151 traverse the membrane as a helical segment; it reads TWLVALGSNLSALWILVANG. Over 152-189 the chain is Periplasmic; that stretch reads WMQHPVGAEFNFETMRMELVDFGALLLNPVAQVKFVHT. H188 lines the heme b pocket. A helical membrane pass occupies residues 190 to 209; the sequence is VASGYVTGAVFVLAISSYYL. Residues 210–221 are Cytoplasmic-facing; sequence LKKRDLGFARRS. Residues 222–241 traverse the membrane as a helical segment; it reads FAIASAFGMASILSVIVLGD. The Periplasmic portion of the chain corresponds to 242–394; it reads ESGYEVGEVQ…VASMFWSFRA (153 aa). Heme b is bound at residue M395. The helical transmembrane segment at 395-414 threads the bilayer; the sequence is MVGAGFAMLILFVCAFWASA. Residues 415 to 472 are Cytoplasmic-facing; it reads RKNEESKPWLLKFALYSLPLPWIATQTGWFVAEHGRQPWTIGGVLPTHLSASSLSTGD. A helical membrane pass occupies residues 473–492; it reads LWGSLIALIAFYTLLLVVEM. The Periplasmic portion of the chain corresponds to 493–537; sequence YLMIRFARLGPSSLHTGRYHFEQLEQHAVKHASPSQADPQQPVNA.

Belongs to the cytochrome ubiquinol oxidase subunit 1 family. Heterodimer of subunits I and II. The cofactor is heme b. Heme d cis-diol is required as a cofactor.

Its subcellular location is the cell inner membrane. It catalyses the reaction 2 a ubiquinol + O2(in) + 4 H(+)(in) = 2 a ubiquinone + 2 H2O(in) + 4 H(+)(out). In terms of biological role, may be involved in maintaining the low intracellular oxygen concentration required for nitrogen fixation. The polypeptide is Cytochrome bd ubiquinol oxidase subunit 1 (cydA) (Azotobacter vinelandii).